Here is a 180-residue protein sequence, read N- to C-terminus: ATP-dependent protease subunit HslV (180 aa).

Residue Thr2 is part of the active site. The Na(+) site is built by Gly157, Cys160, and Ser163.

This sequence belongs to the peptidase T1B family. HslV subfamily. A double ring-shaped homohexamer of HslV is capped on each side by a ring-shaped HslU homohexamer. The assembly of the HslU/HslV complex is dependent on binding of ATP.

It is found in the cytoplasm. It catalyses the reaction ATP-dependent cleavage of peptide bonds with broad specificity.. Allosterically activated by HslU binding. Functionally, protease subunit of a proteasome-like degradation complex believed to be a general protein degrading machinery. The chain is ATP-dependent protease subunit HslV from Wigglesworthia glossinidia brevipalpis.